The chain runs to 131 residues: Class I hydrophobin POH2 (131 aa).

An N-terminal signal peptide occupies residues 1-21; the sequence is MFFRTSSLFTTIVAFTVMAAA. 4 disulfide bridges follow: Cys-50/Cys-110, Cys-57/Cys-104, Cys-58/Cys-91, and Cys-111/Cys-124. N-linked (GlcNAc...) asparagine glycosylation is found at Asn-115 and Asn-128.

It belongs to the fungal hydrophobin family. As to quaternary structure, self-assembles to form functional amyloid fibrils called rodlets. Self-assembly into fibrillar rodlets occurs spontaneously at hydrophobic:hydrophilic interfaces and the rodlets further associate laterally to form amphipathic monolayers. As to expression, expressionn is switched off in the fruiting bodies but abundantly expressed in the vegetative mycelium of both monokaryon and dikaryon.

The protein resides in the secreted. It localises to the cell wall. Its function is as follows. Aerial growth, conidiation, and dispersal of filamentous fungi in the environment rely upon a capability of their secreting small amphipathic proteins called hydrophobins (HPBs) with low sequence identity. Class I can self-assemble into an outermost layer of rodlet bundles on aerial cell surfaces, conferring cellular hydrophobicity that supports fungal growth, development and dispersal; whereas Class II form highly ordered films at water-air interfaces through intermolecular interactions but contribute nothing to the rodlet structure. POH2 is a class I hydrophobin that causes a large drop in the water-surface tension, enabling hyphae to breach the interface and grow into the air, in both the primary and the secondary mycelium. In the latter mycelium POH2 maight also play a role in the emergence of fruiting bodies. Secreted POH2 could also play a role in facilitating lignin degradation. This is Class I hydrophobin POH2 from Pleurotus ostreatus (Oyster mushroom).